Reading from the N-terminus, the 102-residue chain is Citrate lyase acyl carrier protein (102 aa).

S14 carries the post-translational modification O-(phosphoribosyl dephospho-coenzyme A)serine.

The protein belongs to the CitD family. As to quaternary structure, oligomer with a subunit composition of (alpha,beta,gamma)6.

The protein localises to the cytoplasm. In terms of biological role, covalent carrier of the coenzyme of citrate lyase. The chain is Citrate lyase acyl carrier protein from Serratia proteamaculans (strain 568).